Here is an 86-residue protein sequence, read N- to C-terminus: UPF0180 protein CA_C1486 (86 aa).

The protein belongs to the UPF0180 family.

The protein is UPF0180 protein CA_C1486 of Clostridium acetobutylicum (strain ATCC 824 / DSM 792 / JCM 1419 / IAM 19013 / LMG 5710 / NBRC 13948 / NRRL B-527 / VKM B-1787 / 2291 / W).